The following is a 120-amino-acid chain: Sirohydrochlorin cobaltochelatase (120 aa).

His-9 serves as the catalytic Proton acceptor. His-9 serves as a coordination point for Co(2+). Substrate-binding positions include Gln-43 and Phe-68–His-73. His-73 provides a ligand contact to Co(2+).

It belongs to the CbiX family. CbiXS subfamily. Homotetramer; dimer of dimers.

It catalyses the reaction Co-sirohydrochlorin + 2 H(+) = sirohydrochlorin + Co(2+). Its pathway is cofactor biosynthesis; adenosylcobalamin biosynthesis; cob(II)yrinate a,c-diamide from sirohydrochlorin (anaerobic route): step 1/10. Functionally, catalyzes the insertion of Co(2+) into sirohydrochlorin as part of the anaerobic pathway to cobalamin biosynthesis. In Sulfurisphaera tokodaii (strain DSM 16993 / JCM 10545 / NBRC 100140 / 7) (Sulfolobus tokodaii), this protein is Sirohydrochlorin cobaltochelatase.